The chain runs to 421 residues: D-amino acid dehydrogenase (421 aa).

3 to 17 (VTILGAGVIGVTSAY) lines the FAD pocket.

Belongs to the DadA oxidoreductase family. FAD serves as cofactor.

The catalysed reaction is a D-alpha-amino acid + A + H2O = a 2-oxocarboxylate + AH2 + NH4(+). The protein operates within amino-acid degradation; D-alanine degradation; NH(3) and pyruvate from D-alanine: step 1/1. Its function is as follows. Oxidative deamination of D-amino acids. In Allorhizobium ampelinum (strain ATCC BAA-846 / DSM 112012 / S4) (Agrobacterium vitis (strain S4)), this protein is D-amino acid dehydrogenase.